Here is a 342-residue protein sequence, read N- to C-terminus: S-adenosylmethionine:tRNA ribosyltransferase-isomerase (342 aa).

The protein belongs to the QueA family. Monomer.

It is found in the cytoplasm. The catalysed reaction is 7-aminomethyl-7-carbaguanosine(34) in tRNA + S-adenosyl-L-methionine = epoxyqueuosine(34) in tRNA + adenine + L-methionine + 2 H(+). The protein operates within tRNA modification; tRNA-queuosine biosynthesis. Functionally, transfers and isomerizes the ribose moiety from AdoMet to the 7-aminomethyl group of 7-deazaguanine (preQ1-tRNA) to give epoxyqueuosine (oQ-tRNA). This is S-adenosylmethionine:tRNA ribosyltransferase-isomerase from Campylobacter jejuni subsp. jejuni serotype O:23/36 (strain 81-176).